A 174-amino-acid chain; its full sequence is Crossover junction endodeoxyribonuclease RuvC (174 aa).

Active-site residues include Asp8, Glu67, and Asp139. The Mg(2+) site is built by Asp8, Glu67, and Asp139.

Belongs to the RuvC family. In terms of assembly, homodimer which binds Holliday junction (HJ) DNA. The HJ becomes 2-fold symmetrical on binding to RuvC with unstacked arms; it has a different conformation from HJ DNA in complex with RuvA. In the full resolvosome a probable DNA-RuvA(4)-RuvB(12)-RuvC(2) complex forms which resolves the HJ. Mg(2+) serves as cofactor.

Its subcellular location is the cytoplasm. It carries out the reaction Endonucleolytic cleavage at a junction such as a reciprocal single-stranded crossover between two homologous DNA duplexes (Holliday junction).. Functionally, the RuvA-RuvB-RuvC complex processes Holliday junction (HJ) DNA during genetic recombination and DNA repair. Endonuclease that resolves HJ intermediates. Cleaves cruciform DNA by making single-stranded nicks across the HJ at symmetrical positions within the homologous arms, yielding a 5'-phosphate and a 3'-hydroxyl group; requires a central core of homology in the junction. The consensus cleavage sequence is 5'-(A/T)TT(C/G)-3'. Cleavage occurs on the 3'-side of the TT dinucleotide at the point of strand exchange. HJ branch migration catalyzed by RuvA-RuvB allows RuvC to scan DNA until it finds its consensus sequence, where it cleaves and resolves the cruciform DNA. This chain is Crossover junction endodeoxyribonuclease RuvC, found in Stutzerimonas stutzeri (strain A1501) (Pseudomonas stutzeri).